Here is a 479-residue protein sequence, read N- to C-terminus: Serine carboxypeptidase-like 44 (479 aa).

An N-terminal signal peptide occupies residues 1–22; sequence MVGGKWRFLEVAVVVMVLQWSC. 3 disulfide bridges follow: Cys92–Cys352, Cys253–Cys270, and Cys295–Cys320. N-linked (GlcNAc...) asparagine glycosylation occurs at Asn143. The active site involves Ser184. Residue Asn265 is glycosylated (N-linked (GlcNAc...) asparagine). Asn341 carries an N-linked (GlcNAc...) asparagine glycan. Asp389 is a catalytic residue. N-linked (GlcNAc...) asparagine glycosylation occurs at Asn411. His446 is an active-site residue.

Belongs to the peptidase S10 family. As to expression, expressed in seedlings.

It localises to the secreted. Probable carboxypeptidase. The chain is Serine carboxypeptidase-like 44 (SCPL44) from Arabidopsis thaliana (Mouse-ear cress).